We begin with the raw amino-acid sequence, 192 residues long: UPF0301 protein Rru_A3059 (192 aa).

It belongs to the UPF0301 (AlgH) family.

This is UPF0301 protein Rru_A3059 from Rhodospirillum rubrum (strain ATCC 11170 / ATH 1.1.1 / DSM 467 / LMG 4362 / NCIMB 8255 / S1).